A 270-amino-acid polypeptide reads, in one-letter code: MNVEKLKKMKGKEKIVMVTAYDAPSARIARDAGIDVILVGDSLGNNVLGYENTIPVTMEEMLIHVAAVKRGAPDAFIVADMPFLSYQTSVEKAVENAGKFLKVGANAVKIEGGEEFGELVQKLVESGIPVMGHIGLTPQFVNRFGGYRVQGKTEKNREYLLRSARELEKRGAFAIVLELVVEEVAKEITESVSIPTIGIGSGRFCDGQVLVWHDLLGLNPDFAPRFSKKYANLYEVILKALQEFRREVKKGLFPTEEHSFTDKSKGGVSS.

Residues D41 and D80 each contribute to the Mg(2+) site. Residues 41–42 (DS), D80, and K109 contribute to the 3-methyl-2-oxobutanoate site. E111 is a Mg(2+) binding site. The active-site Proton acceptor is E178.

Belongs to the PanB family. Homodecamer; pentamer of dimers. Mg(2+) is required as a cofactor.

It localises to the cytoplasm. The catalysed reaction is 3-methyl-2-oxobutanoate + (6R)-5,10-methylene-5,6,7,8-tetrahydrofolate + H2O = 2-dehydropantoate + (6S)-5,6,7,8-tetrahydrofolate. It participates in cofactor biosynthesis; (R)-pantothenate biosynthesis; (R)-pantoate from 3-methyl-2-oxobutanoate: step 1/2. In terms of biological role, catalyzes the reversible reaction in which hydroxymethyl group from 5,10-methylenetetrahydrofolate is transferred onto alpha-ketoisovalerate to form ketopantoate. This is 3-methyl-2-oxobutanoate hydroxymethyltransferase from Thermotoga maritima (strain ATCC 43589 / DSM 3109 / JCM 10099 / NBRC 100826 / MSB8).